The following is a 760-amino-acid chain: Prolyl endopeptidase FAP (760 aa).

Topologically, residues 1 to 4 (MKTW) are cytoplasmic. A helical; Signal-anchor for type II membrane protein membrane pass occupies residues 5–25 (VKIVFGVATSAVLALLVMCIV). At 26–760 (LRPSRVHNSE…FLKQCFSLSD (735 aa)) the chain is on the extracellular side. Residues N49, N92, and N99 are each glycosylated (N-linked (GlcNAc...) asparagine). Residues E203 and E204 each coordinate substrate. 2 N-linked (GlcNAc...) asparagine glycosylation sites follow: N227 and N314. 3 disulfide bridges follow: C321-C332, C438-C441, and C448-C466. The active-site Charge relay system is the S624. A disulfide bridge links C643 with C755. A glycan (N-linked (GlcNAc...) asparagine) is linked at N679. Catalysis depends on charge relay system residues D702 and H734.

The protein belongs to the peptidase S9B family. Homodimer; homodimerization is required for activity of both plasma membrane and soluble forms. The monomer is inactive. Heterodimer with DPP4. Interacts with PLAUR; the interaction occurs at the cell surface of invadopodia membranes. Interacts with ITGB1. Interacts with ITGA3. Associates with integrin alpha-3/beta-1; the association occurs in a collagen-dependent manner at the cell surface of invadopodia membranes. Post-translationally, N-glycosylated. In terms of processing, the N-terminus may be blocked. Expressed in adipose tissue. Expressed in the dermal fibroblasts in the fetal skin. Expressed in the granulation tissue of healing wounds and on reactive stromal fibroblast in epithelial cancers. Expressed in activated fibroblast-like synoviocytes from inflamed synovial tissues. Expressed in activated hepatic stellate cells (HSC) and myofibroblasts from cirrhotic liver, but not detected in normal liver. Expressed in glioma cells (at protein level). Expressed in glioblastomas and glioma cells. Isoform 1 and isoform 2 are expressed in melanoma, carcinoma and fibroblast cell lines.

It is found in the cell surface. The protein localises to the cell membrane. It localises to the cell projection. The protein resides in the lamellipodium membrane. Its subcellular location is the invadopodium membrane. It is found in the ruffle membrane. The protein localises to the membrane. It localises to the secreted. The protein resides in the cytoplasm. It catalyses the reaction Hydrolysis of Pro-|-Xaa &gt;&gt; Ala-|-Xaa in oligopeptides.. The catalysed reaction is Release of an N-terminal dipeptide, Xaa-Yaa-|-Zaa-, from a polypeptide, preferentially when Yaa is Pro, provided Zaa is neither Pro nor hydroxyproline.. Gelatinase activity is inhibited by serine-protease inhibitors, such as phenylmethylsulfonyl fluoride (PMSF), 4-(2-aminoethyl)-benzenesulfonyl fluoride hydrochloride (AEBSF), 4-amidino phenylsulfonyl fluoride (APSF) and diisopropyl fluorophosphate (DFP), N-ethylmaleimide (NEM) and phenylmethylsulfonyl fluoride (PMSF). Dipeptidyl peptidase activity is inhibited by 2,2'-azino-bis(3-ethylbenzthiazoline-6-sulfonic acid), diisopropylfluorophosphate (DFP). Prolyl endopeptidase activity is inhibited by the boronic acid peptide Ac-Gly-BoroPro, Ac-Gly-Pro-chloromethyl ketone and Thr-Ser-Gly-chloromethyl ketone. Functionally, cell surface glycoprotein serine protease that participates in extracellular matrix degradation and involved in many cellular processes including tissue remodeling, fibrosis, wound healing, inflammation and tumor growth. Both plasma membrane and soluble forms exhibit post-proline cleaving endopeptidase activity, with a marked preference for Ala/Ser-Gly-Pro-Ser/Asn/Ala consensus sequences, on substrate such as alpha-2-antiplasmin SERPINF2 and SPRY2. Degrade also gelatin, heat-denatured type I collagen, but not native collagen type I and IV, vitronectin, tenascin, laminin, fibronectin, fibrin or casein. Also has dipeptidyl peptidase activity, exhibiting the ability to hydrolyze the prolyl bond two residues from the N-terminus of synthetic dipeptide substrates provided that the penultimate residue is proline, with a preference for Ala-Pro, Ile-Pro, Gly-Pro, Arg-Pro and Pro-Pro. Natural neuropeptide hormones for dipeptidyl peptidase are the neuropeptide Y (NPY), peptide YY (PYY), substance P (TAC1) and brain natriuretic peptide 32 (NPPB). The plasma membrane form, in association with either DPP4, PLAUR or integrins, is involved in the pericellular proteolysis of the extracellular matrix (ECM), and hence promotes cell adhesion, migration and invasion through the ECM. Plays a role in tissue remodeling during development and wound healing. Participates in the cell invasiveness towards the ECM in malignant melanoma cancers. Enhances tumor growth progression by increasing angiogenesis, collagen fiber degradation and apoptosis and by reducing antitumor response of the immune system. Promotes glioma cell invasion through the brain parenchyma by degrading the proteoglycan brevican. Acts as a tumor suppressor in melanocytic cells through regulation of cell proliferation and survival in a serine protease activity-independent manner. This Homo sapiens (Human) protein is Prolyl endopeptidase FAP.